Reading from the N-terminus, the 457-residue chain is Adenylosuccinate synthetase isozyme 1 (457 aa).

The segment at 1 to 25 is disordered; sequence MSGTRASNDRPPSAGGVKRGRLQHE. GTP is bound by residues 42–48 and 70–72; these read GDEGKGK and GHT. Residue aspartate 43 is the Proton acceptor of the active site. Mg(2+) is bound by residues aspartate 43 and glycine 70. Aspartate 43 contributes to the substrate binding site. IMP is bound by residues 43–46, 68–71, threonine 163, arginine 177, asparagine 256, threonine 271, and arginine 335; these read DEGK and NAGH. Catalysis depends on histidine 71, which acts as the Proton donor. 331 to 337 is a substrate binding site; sequence VTTGRKR. Residues arginine 337, 363–365, and 445–448 each bind GTP; these read KLD and GVGK.

The protein belongs to the adenylosuccinate synthetase family. Homodimer. It depends on Mg(2+) as a cofactor. As to expression, predominantly expressed in the striated muscle tissues.

Its subcellular location is the cytoplasm. The enzyme catalyses IMP + L-aspartate + GTP = N(6)-(1,2-dicarboxyethyl)-AMP + GDP + phosphate + 2 H(+). It functions in the pathway purine metabolism; AMP biosynthesis via de novo pathway; AMP from IMP: step 1/2. Its function is as follows. Component of the purine nucleotide cycle (PNC), which interconverts IMP and AMP to regulate the nucleotide levels in various tissues, and which contributes to glycolysis and ammoniagenesis. Catalyzes the first committed step in the biosynthesis of AMP from IMP. This is Adenylosuccinate synthetase isozyme 1 from Sus scrofa (Pig).